Reading from the N-terminus, the 166-residue chain is Large ribosomal subunit protein uL10 (166 aa).

The protein belongs to the universal ribosomal protein uL10 family. As to quaternary structure, part of the ribosomal stalk of the 50S ribosomal subunit. The N-terminus interacts with L11 and the large rRNA to form the base of the stalk. The C-terminus forms an elongated spine to which L12 dimers bind in a sequential fashion forming a multimeric L10(L12)X complex.

In terms of biological role, forms part of the ribosomal stalk, playing a central role in the interaction of the ribosome with GTP-bound translation factors. The protein is Large ribosomal subunit protein uL10 of Ureaplasma urealyticum serovar 10 (strain ATCC 33699 / Western).